The primary structure comprises 389 residues: Transcription factor TGAL10 (389 aa).

The disordered stretch occupies residues Asp80 to Ile110. The span at Ser91–Ile110 shows a compositional bias: basic and acidic residues. The region spanning Arg107 to Arg151 is the bZIP domain. The tract at residues Lys109 to Lys129 is basic motif. The segment at Leu135–Ile149 is leucine-zipper. In terms of domain architecture, DOG1 spans Val176–Gly389. Disordered stretches follow at residues Thr320–Gly345 and His370–Gly389. Residues Leu380–Gly389 show a composition bias toward basic residues.

The protein belongs to the bZIP family.

The protein resides in the nucleus. Its function is as follows. Transcriptional regulator involved in defense response. The sequence is that of Transcription factor TGAL10 from Oryza sativa subsp. japonica (Rice).